The primary structure comprises 639 residues: Chaperone protein DnaK (639 aa).

Residue Thr198 is modified to Phosphothreonine; by autocatalysis. Positions 603-618 are enriched in low complexity; it reads AKAQTQGGAQEGAAKQ. Residues 603-639 form a disordered region; the sequence is AKAQTQGGAQEGAAKQSNATADDVVDAEFEEVKDDKK. Over residues 625 to 639 the composition is skewed to acidic residues; sequence DVVDAEFEEVKDDKK.

This sequence belongs to the heat shock protein 70 family.

In terms of biological role, acts as a chaperone. In Shewanella oneidensis (strain ATCC 700550 / JCM 31522 / CIP 106686 / LMG 19005 / NCIMB 14063 / MR-1), this protein is Chaperone protein DnaK.